The sequence spans 366 residues: S-adenosylmethionine synthase 1 (366 aa).

Residue Glu-18 coordinates K(+). Glu-31 and Gln-74 together coordinate L-methionine. ATP is bound by residues 142-144 (DGN), 210-213 (SGRF), Asp-221, 227-228 (RK), Ala-244, Lys-248, and Lys-252. Residue Asp-221 participates in L-methionine binding. Lys-252 lines the L-methionine pocket.

This sequence belongs to the AdoMet synthase family. Homotetramer. Mn(2+) serves as cofactor. Requires Mg(2+) as cofactor. Co(2+) is required as a cofactor. It depends on K(+) as a cofactor.

Its subcellular location is the cytoplasm. It catalyses the reaction L-methionine + ATP + H2O = S-adenosyl-L-methionine + phosphate + diphosphate. The protein operates within amino-acid biosynthesis; S-adenosyl-L-methionine biosynthesis; S-adenosyl-L-methionine from L-methionine: step 1/1. Catalyzes the formation of S-adenosylmethionine from methionine and ATP. The reaction comprises two steps that are both catalyzed by the same enzyme: formation of S-adenosylmethionine (AdoMet) and triphosphate, and subsequent hydrolysis of the triphosphate. The sequence is that of S-adenosylmethionine synthase 1 (SAMS1) from Pisum sativum (Garden pea).